The primary structure comprises 277 residues: Myelin proteolipid protein (277 aa).

Residues 2–9 (GLLECCAR) are Cytoplasmic-facing. S-palmitoyl cysteine attachment occurs at residues cysteine 6, cysteine 7, and cysteine 10. A helical membrane pass occupies residues 10–36 (CLVGAPFASLVATGLCFFGVALFCGCG). Topologically, residues 37 to 63 (HEALTGTEKLIETYFSKNYQDYEYLIN) are extracellular. A helical membrane pass occupies residues 64-88 (VIHAFQYVIYGTASFFFLYGALLLA). Residues 89–151 (EGFYTTGAVR…LGKWLGHPDK (63 aa)) lie on the Cytoplasmic side of the membrane. A lipid anchor (S-palmitoyl cysteine) is attached at cysteine 109. Serine 114 is subject to Phosphoserine. Residues threonine 116 and threonine 118 each carry the phosphothreonine modification. S-palmitoyl cysteine attachment occurs at residues cysteine 139 and cysteine 141. A helical membrane pass occupies residues 152 to 177 (FVGITYALTVVWLLVFACSAVPVYIY). The Extracellular portion of the chain corresponds to 178-233 (FNTWTTCQSIAFPSKTSASIGSLCADARMYGVLPWNAFPGKVCGSNLLSICKTAEF). Cystine bridges form between cysteine 184/cysteine 228 and cysteine 201/cysteine 220. A lipid anchor (O-palmitoyl serine) is attached at serine 199. Residues 234–260 (QMTFHLFIAAFVGAAATLVSLLTFMIA) traverse the membrane as a helical segment. Residues 261–277 (ATYNFAVLKLMGRGTKF) are Cytoplasmic-facing.

It belongs to the myelin proteolipid protein family. As to quaternary structure, interacts with MAL.

The protein localises to the cell membrane. Its subcellular location is the myelin membrane. Its function is as follows. This is the major myelin protein from the central nervous system. It plays an important role in the formation or maintenance of the multilamellar structure of myelin. This Mus musculus (Mouse) protein is Myelin proteolipid protein (Plp1).